Here is a 348-residue protein sequence, read N- to C-terminus: Spermatogenesis-associated protein 32 (348 aa).

Positions 27–36 (YHHHHHPLED) are enriched in basic and acidic residues. The interval 27-61 (YHHHHHPLEDNKDEDNEMGTELSSMKPPPKVDPDP) is disordered. S149 and S152 each carry phosphoserine. Positions 308–329 (APATSPELQEDKDDSVPGTKKG) are disordered. A Phosphothreonine modification is found at T330.

As to quaternary structure, interacts with syntaxin-1 and ACTB. In terms of tissue distribution, abundantly expressed in testes. Expressed in germ cells, but not in Sertoli or Leydig cells of the adult testis. Localized at the acrosomal region of the round and elongated spermatids at stages VIII-X.

The sequence is that of Spermatogenesis-associated protein 32 (Spata32) from Rattus norvegicus (Rat).